The following is a 984-amino-acid chain: Mineralocorticoid receptor (984 aa).

Positions 1 to 602 (METKGYHSLP…STGSSRPSKI (602 aa)) are modulating. The segment covering 231 to 243 (QGTPLTCSPNVEN) has biased composition (polar residues). Disordered regions lie at residues 231–329 (QGTP…AAST) and 346–369 (SGTS…EKGA). Residues Ser-250, Ser-259, Ser-283, Ser-287, and Ser-299 each carry the phosphoserine modification. The span at 259–291 (SPLSSPLSSMKSSISSPPSHCSVKSPVSSPNNV) shows a compositional bias: low complexity. The segment covering 292–329 (TLRSSVSSPANINNSRCSVSSPSNTNNRSTLSSPAAST) has biased composition (polar residues). A compositionally biased stretch (low complexity) spans 346–355 (SGTSAGSSTS). Residues Cys-603, Cys-606, Cys-620, Cys-623, Cys-639, Cys-645, Cys-655, and Cys-658 each contribute to the Zn(2+) site. NR C4-type zinc fingers lie at residues 603-623 (CLVC…CGSC) and 639-663 (CAGR…LQKC). Residues 603–668 (CLVCGDEASG…RLQKCLQAGM (66 aa)) constitute a DNA-binding region (nuclear receptor). Residues 669-725 (NLGARKSKKLGKLKGIHEEQPQQQQPPPPPPPPQSPEEGTTYIAPAKEPSVNTALVP) form a hinge region. Residues 684-710 (IHEEQPQQQQPPPPPPPPQSPEEGTTY) form a disordered region. The segment covering 692-703 (QQPPPPPPPPQS) has biased composition (pro residues). The NR LBD domain maps to 726-964 (QLSTISRALT…EFPAMLVEII (239 aa)). The 21-hydroxyprogesterone site is built by Asn-770 and Gln-776. Aldosterone is bound by residues Asn-770 and Gln-776. Progesterone is bound by residues Asn-770 and Gln-776. The important for coactivator binding stretch occupies residues 782–785 (KWAK). Positions 817 and 945 each coordinate 21-hydroxyprogesterone. Residues Arg-817 and Thr-945 each contribute to the aldosterone site. Residues Arg-817 and Thr-945 each coordinate progesterone.

It belongs to the nuclear hormone receptor family. NR3 subfamily. In terms of assembly, heteromultimeric cytoplasmic complex with HSP90, HSP70, and FKBP4, in the absence of ligand. After ligand binding, it translocates to the nucleus and binds to DNA as a homodimer and as a heterodimer with NR3C1. Binds the coactivator NCOA2. May interact with HSD11B2 in the absence of ligand. Binds the coactivators NCOA1, TIF1 and NRIP1. In terms of processing, phosphorylated.

The protein localises to the cytoplasm. It is found in the nucleus. It localises to the endoplasmic reticulum membrane. Receptor for both mineralocorticoids (MC) such as aldosterone and glucocorticoids (GC) such as corticosterone or cortisol. Binds to mineralocorticoid response elements (MRE) and transactivates target genes. The effect of MC is to increase ion and water transport and thus raise extracellular fluid volume and blood pressure and lower potassium levels. The polypeptide is Mineralocorticoid receptor (NR3C2) (Aotus nancymaae (Ma's night monkey)).